The primary structure comprises 439 residues: uncharacterized protein (439 aa).

The VWFA domain maps to proline 273–serine 439.

This is an uncharacterized protein from Methanocaldococcus jannaschii (strain ATCC 43067 / DSM 2661 / JAL-1 / JCM 10045 / NBRC 100440) (Methanococcus jannaschii).